The sequence spans 178 residues: Protein 105R (178 aa).

The first 18 residues, 1-18 (MYFLFFFLLFLFPVGVKG), serve as a signal peptide directing secretion.

The chain is Protein 105R from Pantherophis guttatus (Corn snake).